The following is a 470-amino-acid chain: Adenosylhomocysteinase (470 aa).

Substrate contacts are provided by Thr61, Asp136, and Glu196. 197 to 199 lines the NAD(+) pocket; that stretch reads TTT. The substrate site is built by Lys226 and Asp230. NAD(+) is bound by residues Asn231, 260-265, Glu283, Asn318, 339-341, and Asn384; these read GYGDVG and IGH.

It belongs to the adenosylhomocysteinase family. NAD(+) serves as cofactor.

The protein localises to the cytoplasm. It carries out the reaction S-adenosyl-L-homocysteine + H2O = L-homocysteine + adenosine. It participates in amino-acid biosynthesis; L-homocysteine biosynthesis; L-homocysteine from S-adenosyl-L-homocysteine: step 1/1. Its function is as follows. May play a key role in the regulation of the intracellular concentration of adenosylhomocysteine. This is Adenosylhomocysteinase from Aromatoleum aromaticum (strain DSM 19018 / LMG 30748 / EbN1) (Azoarcus sp. (strain EbN1)).